A 992-amino-acid chain; its full sequence is RNA-binding motif protein, X-linked-like-3 (992 aa).

Residues 8–86 enclose the RRM domain; it reads EKLFVGGLNL…KAIMVAQTIK (79 aa). 7 disordered regions span residues 91 to 130, 144 to 169, 188 to 207, 278 to 385, 397 to 511, 562 to 588, and 644 to 992; these read SSRW…PDDG, APMP…DPGD, PDYC…GRDH, DHLP…DSSS, EEYQ…HRYR, SLDA…SHRY, and NSGG…QSRY. Positions 284 to 296 are enriched in low complexity; that stretch reads YSGGRSSSSNSYS. The segment covering 297 to 316 has biased composition (basic and acidic residues); it reads RSDRYGEEGCYEEYRGRSPD. Positions 318-334 are enriched in low complexity; sequence HSGGRNSSSNSYGQSHH. Basic and acidic residues predominate over residues 335–371; it reads YGGEGRYEEYRGRYEEYRGRSHEARSGGRSTDAHSGG. Low complexity predominate over residues 454-471; the sequence is THSGGRSSSSNSYGQSHR. Basic and acidic residues predominate over residues 472–488; sequence YGGEGHYEYRGRSHDAH. Polar residues-rich tracts occupy residues 564-574, 644-664, and 752-774; these read DANSGGRSPNA, NSGG…SQSH, and DANS…SNSY. The span at 785-798 shows a compositional bias: basic and acidic residues; sequence HYEEYRGRSHDTHS. The span at 818–828 shows a compositional bias: polar residues; it reads GRNSFSNSYGQ. 3 stretches are compositionally biased toward basic and acidic residues: residues 831-842, 920-948, and 981-992; these read HYGRGGRYEEYQ, SGDH…RPDR, and GRFERGEGQSRY.

This chain is RNA-binding motif protein, X-linked-like-3 (RBMXL3), found in Pan troglodytes (Chimpanzee).